Here is a 548-residue protein sequence, read N- to C-terminus: ATP synthase subunit alpha (548 aa).

Position 172 to 179 (172 to 179 (GDRKTGKT)) interacts with ATP.

Belongs to the ATPase alpha/beta chains family. F-type ATPases have 2 components, CF(1) - the catalytic core - and CF(0) - the membrane proton channel. CF(1) has five subunits: alpha(3), beta(3), gamma(1), delta(1), epsilon(1). CF(0) has three main subunits: a(1), b(2) and c(9-12). The alpha and beta chains form an alternating ring which encloses part of the gamma chain. CF(1) is attached to CF(0) by a central stalk formed by the gamma and epsilon chains, while a peripheral stalk is formed by the delta and b chains.

The protein localises to the cell membrane. The catalysed reaction is ATP + H2O + 4 H(+)(in) = ADP + phosphate + 5 H(+)(out). Its function is as follows. Produces ATP from ADP in the presence of a proton gradient across the membrane. The alpha chain is a regulatory subunit. The protein is ATP synthase subunit alpha of Mycobacteroides abscessus (strain ATCC 19977 / DSM 44196 / CCUG 20993 / CIP 104536 / JCM 13569 / NCTC 13031 / TMC 1543 / L948) (Mycobacterium abscessus).